The primary structure comprises 165 residues: SsrA-binding protein (165 aa).

Residues 141–165 (EDRRHAIAERETKREMDREISRRRR) are disordered.

It belongs to the SmpB family.

It localises to the cytoplasm. Functionally, required for rescue of stalled ribosomes mediated by trans-translation. Binds to transfer-messenger RNA (tmRNA), required for stable association of tmRNA with ribosomes. tmRNA and SmpB together mimic tRNA shape, replacing the anticodon stem-loop with SmpB. tmRNA is encoded by the ssrA gene; the 2 termini fold to resemble tRNA(Ala) and it encodes a 'tag peptide', a short internal open reading frame. During trans-translation Ala-aminoacylated tmRNA acts like a tRNA, entering the A-site of stalled ribosomes, displacing the stalled mRNA. The ribosome then switches to translate the ORF on the tmRNA; the nascent peptide is terminated with the 'tag peptide' encoded by the tmRNA and targeted for degradation. The ribosome is freed to recommence translation, which seems to be the essential function of trans-translation. The sequence is that of SsrA-binding protein from Anaeromyxobacter sp. (strain Fw109-5).